The chain runs to 98 residues: NADH-ubiquinone oxidoreductase chain 4L (98 aa).

Helical transmembrane passes span 1-21 (MSMVYANIFLAFIMSLMGLLM), 29-49 (SLLCLEGMMLSLFVMMTVTIL), and 61-81 (IILLVFAACEAALGLSLLVMV).

The protein belongs to the complex I subunit 4L family. In terms of assembly, core subunit of respiratory chain NADH dehydrogenase (Complex I) which is composed of 45 different subunits.

It localises to the mitochondrion inner membrane. The enzyme catalyses a ubiquinone + NADH + 5 H(+)(in) = a ubiquinol + NAD(+) + 4 H(+)(out). In terms of biological role, core subunit of the mitochondrial membrane respiratory chain NADH dehydrogenase (Complex I) which catalyzes electron transfer from NADH through the respiratory chain, using ubiquinone as an electron acceptor. Part of the enzyme membrane arm which is embedded in the lipid bilayer and involved in proton translocation. This chain is NADH-ubiquinone oxidoreductase chain 4L (MT-ND4L), found in Phoca fasciata (Ribbon seal).